The chain runs to 690 residues: MNLRSVFTVEQQRILQRYYENGMTNQSKNCFQLILQCAQETKLDFSVVRTWVGNKRRKMSSKNSESGTATTGTSLSAPDITVRNVVNIARPSSQQSSWTSANNDVIVTGIYSPASSSSRQGTNKHTDTQITEAHKIPIQKTATKNDTEFQLHIPVQRQVAHCKNASLLLGEKTIILSRQTSVLNAGNSVFNHAKKNYGNSSVQASEMTVPQKPSVCHRPCKIEPVGIQRSYKPEHTGPALHNLCGQKPTIRDPYCRTQNLEIREVFSLAVSDYPQRILGGNAPQKPSSAEGNCLSIAMETGDAEDEYAREEELASMRAQIPSYSRFYESGSSLRAENQSTTLPGPGRNMPNSQMVNIRDMSDNVLYQNRNYHLTPRTSLHTASSTMYSNTNPLRSNFSPHFASSNQLRLSQNQNNYQISGNLTVPWITGCSRKRALQDRTQFSDRDLATLKKYWDNGMTSLGSVCREKIEAVATELNVDCEIVRTWIGNRRRKYRLMGIEVPPPRGGPADFSEQPESGSLSALTPGEEAGPEVGEDNDRNDEVSICLSEGSSQEEPNEVVPNDARAHKEEDHHAVTTDNVKIEIIDDEESDMISNSEVEQVNSFLDYKNEEVKFIENELEIQKQKYFKLQTFVRSLILAMKADDKEQQQALLSDLPPELEEMDFNHASLEPDDTSFSVSSLSEKNVSESL.

Positions 3 to 63 form a DNA-binding region, homeobox 1; sequence LRSVFTVEQQ…NKRRKMSSKN (61 aa). Disordered stretches follow at residues 55-76 and 112-132; these read KRRK…TSLS and SPAS…QITE. Positions 64 to 76 are enriched in low complexity; sequence SESGTATTGTSLS. Residues 113–123 are compositionally biased toward polar residues; sequence PASSSSRQGTN. Glycyl lysine isopeptide (Lys-Gly) (interchain with G-Cter in SUMO2) cross-links involve residues lysine 135, lysine 140, lysine 144, lysine 163, lysine 172, lysine 194, lysine 212, lysine 221, and lysine 232. Positions 435-498 form a DNA-binding region, homeobox 2; that stretch reads ALQDRTQFSD…NRRRKYRLMG (64 aa). A disordered region spans residues 501 to 539; that stretch reads VPPPRGGPADFSEQPESGSLSALTPGEEAGPEVGEDNDR. A Glycyl lysine isopeptide (Lys-Gly) (interchain with G-Cter in SUMO2) cross-link involves residue lysine 613. The disordered stretch occupies residues 664–690; that stretch reads FNHASLEPDDTSFSVSSLSEKNVSESL. Over residues 674–690 the composition is skewed to polar residues; the sequence is TSFSVSSLSEKNVSESL.

The protein resides in the nucleus. This is Highly divergent homeobox (HDX) from Homo sapiens (Human).